A 322-amino-acid polypeptide reads, in one-letter code: Protein lin-56 (322 aa).

The disordered stretch occupies residues 264 to 322 (SSQKLQQNGFPEKVEQMDKYSNKLKDEASDKKYEKPGKKDYVEEEGYWAPITDSEDDEA). Residues 275–304 (EKVEQMDKYSNKLKDEASDKKYEKPGKKDY) show a composition bias toward basic and acidic residues.

As to expression, widely expressed throughout embryonic development. Expressed in the six multipotent ventral ectodermal blast cells, P3.p-P8.p, which generate the vulva and in their descendants throughout vulval development.

The protein resides in the nucleus. In terms of biological role, required for translation, stability and/or localization of lin-15a. The protein is Protein lin-56 (lin-56) of Caenorhabditis elegans.